An 864-amino-acid chain; its full sequence is Coiled-coil and C2 domain-containing protein 1B (864 aa).

The disordered stretch occupies residues 82–154; sequence QDCMTDMTGE…VNSSVAEIQH (73 aa). Acidic residues-rich tracts occupy residues 89–104 and 111–129; these read TGEDDDDDLEEDEELL and VGEEEEVEQSQPSDTEESE. Positions 91–118 form a coiled coil; the sequence is EDDDDDLEEDEELLAELQDVVGEEEEVE. Positions 142-154 are enriched in polar residues; it reads EQQVNSSVAEIQH. Positions 162 to 209 form a coiled coil; it reads GMLQVLEERIGNYKEAISNAKLSNESAKARRYERGLKTLESMLSAARQ. Residues 218-249 form a disordered region; that stretch reads IPPPVACGKPAVSPTTDVPTTDTSKQGLGDLN. Low complexity predominate over residues 229-241; that stretch reads VSPTTDVPTTDTS. Positions 385–412 form a coiled coil; it reads VGSLLQALQQRMEKYKSAAQQAKSSGDD. 2 disordered regions span residues 441-463 and 478-502; these read AELPVPPGFPPLPGMEQTEEEGS and AGEDVDDDEDECQAKPPGHPKPTQL. Positions 444–453 are enriched in pro residues; the sequence is PVPPGFPPLP. 2 coiled-coil regions span residues 464–488 and 535–564; these read VEKALEAAQKLAKTAGEDVDDDEDE and PAVQEQLEFLEHRKKQYRKAALQAKQKNDL. The 136-residue stretch at 685–820 folds into the C2 domain; that stretch reads HFEDKTLKIV…ETQCEIREIV (136 aa).

Belongs to the CC2D1 family.

This chain is Coiled-coil and C2 domain-containing protein 1B (cc2d1b), found in Xenopus laevis (African clawed frog).